A 354-amino-acid polypeptide reads, in one-letter code: DNA ligase C2 (354 aa).

Lys29 acts as the N6-AMP-lysine intermediate in catalysis.

This sequence belongs to the ATP-dependent DNA ligase family.

It catalyses the reaction ATP + (deoxyribonucleotide)n-3'-hydroxyl + 5'-phospho-(deoxyribonucleotide)m = (deoxyribonucleotide)n+m + AMP + diphosphate.. DNA ligase that seals nicks in double-stranded DNA during DNA replication, DNA recombination and DNA repair. Has weak intrinsic nick joining activities and accumulates DNA-adenylate. Acts as a backup for LigD in the Ku-LigD-dependent NHEJ pathway. The chain is DNA ligase C2 (ligC2) from Mycolicibacterium smegmatis (strain ATCC 700084 / mc(2)155) (Mycobacterium smegmatis).